The primary structure comprises 101 residues: Small ribosomal subunit protein uS14A (101 aa).

The interval 31 to 74 is disordered; the sequence is IRKPSTPEADRAAAQAALQRLPRDASPVRLRNRDAADGRPRGHL. Basic and acidic residues predominate over residues 61-70; the sequence is RNRDAADGRP.

Belongs to the universal ribosomal protein uS14 family. In terms of assembly, part of the 30S ribosomal subunit. Contacts proteins S3 and S10.

Binds 16S rRNA, required for the assembly of 30S particles and may also be responsible for determining the conformation of the 16S rRNA at the A site. This is Small ribosomal subunit protein uS14A from Nocardia farcinica (strain IFM 10152).